Reading from the N-terminus, the 337-residue chain is Anthranilate phosphoribosyltransferase (337 aa).

Residues G81, 84 to 85, S89, 91 to 94, 109 to 117, and A121 contribute to the 5-phospho-alpha-D-ribose 1-diphosphate site; these read GD, NVST, and KHGNRAATS. Residue G81 participates in anthranilate binding. S93 provides a ligand contact to Mg(2+). Position 112 (N112) interacts with anthranilate. R167 serves as a coordination point for anthranilate. Residues D226 and E227 each contribute to the Mg(2+) site.

The protein belongs to the anthranilate phosphoribosyltransferase family. In terms of assembly, homodimer. It depends on Mg(2+) as a cofactor.

The catalysed reaction is N-(5-phospho-beta-D-ribosyl)anthranilate + diphosphate = 5-phospho-alpha-D-ribose 1-diphosphate + anthranilate. Its pathway is amino-acid biosynthesis; L-tryptophan biosynthesis; L-tryptophan from chorismate: step 2/5. Catalyzes the transfer of the phosphoribosyl group of 5-phosphorylribose-1-pyrophosphate (PRPP) to anthranilate to yield N-(5'-phosphoribosyl)-anthranilate (PRA). This Methylorubrum extorquens (strain CM4 / NCIMB 13688) (Methylobacterium extorquens) protein is Anthranilate phosphoribosyltransferase.